Reading from the N-terminus, the 901-residue chain is Protein translocase subunit SecA (901 aa).

ATP is bound by residues Gln87, 105–109 (GEGKT), and Asp512. A disordered region spans residues 855-891 (QQLSHQDDETAAAAALAEQTGERKVGRNDPCPCGSGK). Zn(2+) contacts are provided by Cys885, Cys887, Cys896, and His897.

This sequence belongs to the SecA family. Monomer and homodimer. Part of the essential Sec protein translocation apparatus which comprises SecA, SecYEG and auxiliary proteins SecDF-YajC and YidC. It depends on Zn(2+) as a cofactor.

The protein resides in the cell inner membrane. The protein localises to the cytoplasm. It catalyses the reaction ATP + H2O + cellular proteinSide 1 = ADP + phosphate + cellular proteinSide 2.. In terms of biological role, part of the Sec protein translocase complex. Interacts with the SecYEG preprotein conducting channel. Has a central role in coupling the hydrolysis of ATP to the transfer of proteins into and across the cell membrane, serving both as a receptor for the preprotein-SecB complex and as an ATP-driven molecular motor driving the stepwise translocation of polypeptide chains across the membrane. This Cronobacter sakazakii (strain ATCC BAA-894) (Enterobacter sakazakii) protein is Protein translocase subunit SecA.